Consider the following 319-residue polypeptide: Succinoglycan biosynthesis protein ExoW (319 aa).

This sequence belongs to the glycosyltransferase 2 family.

Its subcellular location is the cell membrane. It functions in the pathway glycan metabolism; exopolysaccharide biosynthesis. Functionally, glycosyltransferase required for the synthesis of succinoglycan (EPS I). Needed for the addition of the seventh sugar (glucose), catalyzes the formation of a beta-1,3 linkage between the seventh and eighth sugar. This Rhizobium meliloti (strain 1021) (Ensifer meliloti) protein is Succinoglycan biosynthesis protein ExoW (exoW).